The following is a 158-amino-acid chain: Transcription elongation factor GreA (158 aa).

The protein belongs to the GreA/GreB family.

Functionally, necessary for efficient RNA polymerase transcription elongation past template-encoded arresting sites. The arresting sites in DNA have the property of trapping a certain fraction of elongating RNA polymerases that pass through, resulting in locked ternary complexes. Cleavage of the nascent transcript by cleavage factors such as GreA or GreB allows the resumption of elongation from the new 3'terminus. GreA releases sequences of 2 to 3 nucleotides. In Pseudomonas syringae pv. tomato (strain ATCC BAA-871 / DC3000), this protein is Transcription elongation factor GreA.